Consider the following 260-residue polypeptide: Proteasome subunit alpha (260 aa).

This sequence belongs to the peptidase T1A family. As to quaternary structure, the 20S proteasome core is composed of 14 alpha and 14 beta subunits that assemble into four stacked heptameric rings, resulting in a barrel-shaped structure. The two inner rings, each composed of seven catalytic beta subunits, are sandwiched by two outer rings, each composed of seven alpha subunits. The catalytic chamber with the active sites is on the inside of the barrel. Has a gated structure, the ends of the cylinder being occluded by the N-termini of the alpha-subunits. Is capped at one or both ends by the proteasome regulatory ATPase, PAN.

It is found in the cytoplasm. The formation of the proteasomal ATPase PAN-20S proteasome complex, via the docking of the C-termini of PAN into the intersubunit pockets in the alpha-rings, triggers opening of the gate for substrate entry. Interconversion between the open-gate and close-gate conformations leads to a dynamic regulation of the 20S proteasome proteolysis activity. Its function is as follows. Component of the proteasome core, a large protease complex with broad specificity involved in protein degradation. The chain is Proteasome subunit alpha from Pyrococcus abyssi (strain GE5 / Orsay).